A 122-amino-acid chain; its full sequence is MGTGLRSQSLRGPRPSYGKLQEPWGRPTEGRLRRALSLRQGREKSRSSDGGPERLDTLGQEWLPGSLGDTEQLIQAEQEGSQRWLRQYQQKIRRRWESFVTSFPNVTLSRSASPQPPLGTTS.

A compositionally biased stretch (polar residues) spans 1–10; sequence MGTGLRSQSL. Residues 1–68 form a disordered region; it reads MGTGLRSQSL…GQEWLPGSLG (68 aa). The segment covering 40-56 has biased composition (basic and acidic residues); it reads QGREKSRSSDGGPERLD.

This is an uncharacterized protein from Bos taurus (Bovine).